We begin with the raw amino-acid sequence, 751 residues long: Lanosterol synthase erg7A (751 aa).

The interval M1 to N22 is disordered. A PFTB 1 repeat occupies A147–G189. Residue D481 is the Proton donor of the active site. PFTB repeat units lie at residues L508–Y553, K585–G625, and A634–A675.

This sequence belongs to the terpene cyclase/mutase family.

Its subcellular location is the lipid droplet. The protein localises to the endoplasmic reticulum membrane. It catalyses the reaction (S)-2,3-epoxysqualene = lanosterol. Its pathway is steroid metabolism; ergosterol biosynthesis. Functionally, lanosterol synthase; part of the third module of ergosterol biosynthesis pathway that includes the late steps of the pathway. ERG7A and ERG7B catalyze the cyclization of (S)-2,3 oxidosqualene to lanosterol, a reaction that forms the sterol core. The third module or late pathway involves the ergosterol synthesis itself through consecutive reactions that mainly occur in the endoplasmic reticulum (ER) membrane. Firstly, the squalene synthase erg9 catalyzes the condensation of 2 farnesyl pyrophosphate moieties to form squalene, which is the precursor of all steroids. Squalene synthase is crucial for balancing the incorporation of farnesyl diphosphate (FPP) into sterol and nonsterol isoprene synthesis. Secondly, squalene is converted into lanosterol by the consecutive action of the squalene epoxidase erg1 and the lanosterol synthase erg7. Then, the delta(24)-sterol C-methyltransferase erg6 methylates lanosterol at C-24 to produce eburicol. Eburicol is the substrate of the sterol 14-alpha demethylase encoded by cyp51A and cyp51B, to yield 4,4,24-trimethyl ergosta-8,14,24(28)-trienol. The C-14 reductase erg24 then reduces the C14=C15 double bond which leads to 4,4-dimethylfecosterol. A sequence of further demethylations at C-4, involving the C-4 demethylation complex containing the C-4 methylsterol oxidases erg25A or erg25B, the sterol-4-alpha-carboxylate 3-dehydrogenase erg26 and the 3-keto-steroid reductase erg27, leads to the production of fecosterol via 4-methylfecosterol. The C-8 sterol isomerase erg2 then catalyzes the reaction which results in unsaturation at C-7 in the B ring of sterols and thus converts fecosterol to episterol. The sterol-C5-desaturase erg3B then catalyzes the introduction of a C-5 double bond in the B ring to produce 5-dehydroepisterol. The 2 other sterol-C5-desaturases, erg3A and erg3C, seem to be less important in ergosterol biosynthesis. The C-22 sterol desaturase erg5 further converts 5-dehydroepisterol into ergosta-5,7,22,24(28)-tetraen-3beta-ol by forming the C-22(23) double bond in the sterol side chain. Finally, ergosta-5,7,22,24(28)-tetraen-3beta-ol is substrate of the C-24(28) sterol reductases erg4A and erg4B to produce ergosterol. Possible alternative sterol biosynthetic pathways might exist from fecosterol to ergosterol, depending on the activities of the erg3 isoforms. The protein is Lanosterol synthase erg7A of Aspergillus fumigatus (strain ATCC MYA-4609 / CBS 101355 / FGSC A1100 / Af293) (Neosartorya fumigata).